A 252-amino-acid polypeptide reads, in one-letter code: Geranylgeranylglyceryl phosphate synthase (252 aa).

Residues Asp-26 and Ser-55 each coordinate Mg(2+). Sn-glycerol 1-phosphate contacts are provided by residues 174-180 (YLEAGSG), 205-206 (GG), and 227-228 (GT).

This sequence belongs to the GGGP/HepGP synthase family. Group II subfamily. It depends on Mg(2+) as a cofactor.

The protein resides in the cytoplasm. It carries out the reaction sn-glycerol 1-phosphate + (2E,6E,10E)-geranylgeranyl diphosphate = sn-3-O-(geranylgeranyl)glycerol 1-phosphate + diphosphate. It functions in the pathway membrane lipid metabolism; glycerophospholipid metabolism. Functionally, prenyltransferase that catalyzes the transfer of the geranylgeranyl moiety of geranylgeranyl diphosphate (GGPP) to the C3 hydroxyl of sn-glycerol-1-phosphate (G1P). This reaction is the first ether-bond-formation step in the biosynthesis of archaeal membrane lipids. The protein is Geranylgeranylglyceryl phosphate synthase of Thermococcus gammatolerans (strain DSM 15229 / JCM 11827 / EJ3).